Consider the following 176-residue polypeptide: ATP-dependent protease subunit HslV (176 aa).

The active site involves threonine 6. The Na(+) site is built by serine 161, cysteine 164, and threonine 167.

This sequence belongs to the peptidase T1B family. HslV subfamily. In terms of assembly, a double ring-shaped homohexamer of HslV is capped on each side by a ring-shaped HslU homohexamer. The assembly of the HslU/HslV complex is dependent on binding of ATP.

Its subcellular location is the cytoplasm. It carries out the reaction ATP-dependent cleavage of peptide bonds with broad specificity.. Its activity is regulated as follows. Allosterically activated by HslU binding. Functionally, protease subunit of a proteasome-like degradation complex believed to be a general protein degrading machinery. This is ATP-dependent protease subunit HslV from Thermosipho africanus (strain TCF52B).